The following is an 846-amino-acid chain: MQERYDYQQIEKKWQKYWADTGMFRLQQEEGRPKYYCLEMFPYPSGNLHMGHVRVYSIGDVVARFKTMQGYNVLHPMGWDAFGLPAENAAIKHKVPPADWTWSNIANMRRQLQSMGISYDWEREVATCHPDYYKWTQWLFLQLYKAGLAYKKKANVNWCPDCATVLANEQVVDGLCERCDATVEKKALEQWFFRITDYAQRLLDDLNKLPGWPDKVKTMQENWIGRSEGVEADFALENPVGGVDKLTVYTTRQDTIFGVTYMVLAPEHPAVEALVSGNPREAELRAFIKKVLSQSEIDRTANDTEKEGIFTGHYCINPLTGEKVAVYLANYVLVDYGTGAVMGVPAHDQRDFEFATKYNIPMKVVIQPEGLPDLDVEEMDHAYEGEGRLVNSGEFDGLINTQALDVIADKLEREGKGVRKVNYRLRDWLISRQRYWGAPIPVIYCEKCGEVAVPDEQLPVMLPTDVAFTPSGESPLTSRPDFYECTCPRCGGKGRRETDTMDTFVCSSWYFLRYCTPKDKDHAFLQEDVDYWMNVDQYIGGVEHAILHLMYARFFTKVLYDLKLVKVEEPFENLLTQGMVLMGGSKMSKSKGNTVSPEEIIAKYGADTARLFILFAAPPERDLEWSDRGVEGAHRFLHRLWRLVYAYSDQIASVPGTMVGYGKGQPNGSKGDNLFSLNSDDRELVRVAHYTVKKVTEDIGQRFNFNTAVSAIMEMVNYFYQYKDKVPAEQQNIPLVKDALARLVLVLAPFAPHICEELWQVIGGGESVYKQPWPTYDEQALVRDEVEVVVQINGKVREKLRVANGLDGEAIKAKVLEMDKVQALIAGKSVVKLITVPNKLVNIVVK.

The short motif at 42–52 is the 'HIGH' region element; it reads PYPSGNLHMGH. A 'KMSKS' region motif is present at residues 586–590; the sequence is KMSKS. K589 provides a ligand contact to ATP.

It belongs to the class-I aminoacyl-tRNA synthetase family.

Its subcellular location is the cytoplasm. It carries out the reaction tRNA(Leu) + L-leucine + ATP = L-leucyl-tRNA(Leu) + AMP + diphosphate. The sequence is that of Leucine--tRNA ligase from Heliobacterium modesticaldum (strain ATCC 51547 / Ice1).